The sequence spans 219 residues: MLRAGAPTAGSFRTEEVHTGTTIMAVEFDGGVVVGSDSRVSAGAAVVNRVFDKLSPLHQRIFCALSGSAADAQAIADMAAYQLELHGLELEEPPLVLAAANVVKNISYKYREDLLAHLIVAGWDQREGGQVYGTMGGMLIRQPFTIGGSGSSYIYGYVDAAYKPGMTPEECRRFTTNAITLAMNRDGSSGGVIYLVTITAAGVDHRVILGDELPKFYGE.

A propeptide spans 1-20 (removed in mature form); the sequence is MLRAGAPTAGSFRTEEVHTG. The active-site Nucleophile is the T21. N6-acetyllysine is present on residues K53 and K109.

The protein belongs to the peptidase T1B family. The 26S proteasome consists of a 20S proteasome core and two 19S regulatory subunits. The 20S proteasome core is composed of 28 subunits that are arranged in four stacked rings, resulting in a barrel-shaped structure. The two end rings are each formed by seven alpha subunits, and the two central rings are each formed by seven beta subunits. The catalytic chamber with the active sites is on the inside of the barrel. Component of the immunoproteasome, where it displaces the equivalent housekeeping subunit PSMB6. Component of the spermatoproteasome, a form of the proteasome specifically found in testis. Autocleaved. The resulting N-terminal Thr residue of the mature subunit is responsible for the nucleophile proteolytic activity.

The protein localises to the cytoplasm. The protein resides in the nucleus. The catalysed reaction is Cleavage of peptide bonds with very broad specificity.. Its function is as follows. The proteasome is a multicatalytic proteinase complex which is characterized by its ability to cleave peptides with Arg, Phe, Tyr, Leu, and Glu adjacent to the leaving group at neutral or slightly basic pH. The proteasome has an ATP-dependent proteolytic activity. This subunit is involved in antigen processing to generate class I binding peptides. This Mus terricolor (Earth-colored mouse) protein is Proteasome subunit beta type-9 (Psmb9).